A 1224-amino-acid polypeptide reads, in one-letter code: Coatomer subunit alpha (1224 aa).

WD repeat units follow at residues 3-38 (TKFETKSARVKGLSFHPKRPWILTSLHNGVIQLWDY), 42-80 (TLIDKFDEHDGPVRGIDFHKQQPLFVSGGDDYKIKVWNY), 84-122 (RCLFTLLGHLDYIRTTFFHHEYPWILSASDDQTIRVWNW), and 126-164 (TCVCVLTGHNHYVMCAQFHPTEDLVVSASLDQTVRVWDI). At serine 173 the chain carries Phosphoserine. Threonine 185 is subject to Phosphothreonine. 3 WD repeats span residues 195 to 234 (AVVKHVLEGHDRGVNWAAFHPTMPLIVSGADDRQVKIWRM), 241 to 278 (EVDTCRGHYNNVSCAVFHPRQELILSNSEDKSIRVWDM), and 282 to 319 (TGVQTFRRDHDRFWVLAAHPNLNLFAAGHDGGMIVFKL). Serine 402 is subject to Phosphoserine. Phosphothreonine is present on threonine 591. Residue serine 895 is modified to Phosphoserine. At arginine 965 the chain carries Omega-N-methylarginine. Serine 1193 is modified (phosphoserine).

Oligomeric complex that consists of at least the alpha, beta, beta', gamma, delta, epsilon and zeta subunits. Interacts with SCYL1. Interacts with JAGN1. Interacts with TMEM41B. Interacts with SVEP1. Probably interacts with PEX11A. Uniformly expressed in a wide range of adult and fetal tissues. Xenin is found in gastric, duodenal and jejunal mucosa. Circulates in the blood. Seems to be confined to specific endocrine cells.

The protein resides in the cytoplasm. It is found in the golgi apparatus membrane. Its subcellular location is the cytoplasmic vesicle. The protein localises to the COPI-coated vesicle membrane. It localises to the secreted. In terms of biological role, the coatomer is a cytosolic protein complex that binds to dilysine motifs and reversibly associates with Golgi non-clathrin-coated vesicles, which further mediate biosynthetic protein transport from the ER, via the Golgi up to the trans Golgi network. Coatomer complex is required for budding from Golgi membranes, and is essential for the retrograde Golgi-to-ER transport of dilysine-tagged proteins. In mammals, the coatomer can only be recruited by membranes associated to ADP-ribosylation factors (ARFs), which are small GTP-binding proteins; the complex also influences the Golgi structural integrity, as well as the processing, activity, and endocytic recycling of LDL receptors. Xenin stimulates exocrine pancreatic secretion. It inhibits pentagastrin-stimulated secretion of acid, to induce exocrine pancreatic secretion and to affect small and large intestinal motility. In the gut, xenin interacts with the neurotensin receptor. The polypeptide is Coatomer subunit alpha (COPA) (Homo sapiens (Human)).